The chain runs to 266 residues: Small ribosomal subunit protein uS2 (266 aa).

Residues 227 to 266 form a disordered region; sequence GVSFTEETPSEPIQSDSSEEEEGSLDISDLFEDTDLKEEE. Residues 231–240 show a composition bias toward polar residues; that stretch reads TEETPSEPIQ. Acidic residues predominate over residues 243–266; the sequence is SSEEEEGSLDISDLFEDTDLKEEE.

It belongs to the universal ribosomal protein uS2 family.

The sequence is that of Small ribosomal subunit protein uS2 from Pseudothermotoga lettingae (strain ATCC BAA-301 / DSM 14385 / NBRC 107922 / TMO) (Thermotoga lettingae).